Reading from the N-terminus, the 460-residue chain is Photosystem II CP43 reaction center protein (460 aa).

Residues 1 to 35 (MVTLSNTSMVGGRDLPSTGFAWWSGNARLINLSGK) are Cytoplasmic-facing. The helical transmembrane segment at 36–58 (LLGAHVAHAGLIVFWAGAMTLFE) threads the bilayer. Over 59-98 (VAHFIPEKPMYEQGLILLPHIATLGWGVGPAGEVTDIFPF) the chain is Lumenal, thylakoid. A helical transmembrane segment spans residues 99–121 (FVVGVLHLISSAVLGLGGIYHAL). The Cytoplasmic portion of the chain corresponds to 122-142 (RGPEVLEEYSSFFGYDWKDKN). Residues 143–165 (QMTNIIGYHLILLGCGALLLVFK) traverse the membrane as a helical segment. Residues 166–220 (AMFFGGVYDTWAPGGGDVRVITNPTLNPAIIFGYLLKAPFGGEGWIISVNNMEDI) lie on the Lumenal, thylakoid side of the membrane. A helical membrane pass occupies residues 221–240 (IGGHIWIGLICISGGIWHIL). At 241–255 (TKPFGWARRALIWSG) the chain is on the cytoplasmic side. Residues 256–276 (EAYLSYSLGALSLMGFIASVF) traverse the membrane as a helical segment. Over 277 to 411 (VWFNNTAYPS…NSFNYVSPRA (135 aa)) the chain is Lumenal, thylakoid. 2 residues coordinate [CaMn4O5] cluster: Glu341 and Arg344. A helical membrane pass occupies residues 412–436 (WLATSHFVLGFFFLVGHLWHAGRAR). The Cytoplasmic portion of the chain corresponds to 437–460 (AAAAGFEKGIDRETEPTLFMPDLD).

It belongs to the PsbB/PsbC family. PsbC subfamily. In terms of assembly, PSII is composed of 1 copy each of membrane proteins PsbA, PsbB, PsbC, PsbD, PsbE, PsbF, PsbH, PsbI, PsbJ, PsbK, PsbL, PsbM, PsbT, PsbX, PsbY, PsbZ, Psb30/Ycf12, peripheral proteins PsbO, CyanoQ (PsbQ), PsbU, PsbV and a large number of cofactors. It forms dimeric complexes. Binds multiple chlorophylls and provides some of the ligands for the Ca-4Mn-5O cluster of the oxygen-evolving complex. It may also provide a ligand for a Cl- that is required for oxygen evolution. PSII binds additional chlorophylls, carotenoids and specific lipids. is required as a cofactor.

Its subcellular location is the cellular thylakoid membrane. One of the components of the core complex of photosystem II (PSII). PSII binds chlorophyll and helps catalyze the primary light-induced photochemical processes of PSII. PSII is a light-driven water:plastoquinone oxidoreductase, using light energy to abstract electrons from H(2)O, generating O(2) and a proton gradient subsequently used for ATP formation. Required for correct assembly of PSII. This Synechocystis sp. (strain ATCC 27184 / PCC 6803 / Kazusa) protein is Photosystem II CP43 reaction center protein.